A 387-amino-acid chain; its full sequence is Mannitol-1-phosphate 5-dehydrogenase (387 aa).

Residue 3–14 participates in NAD(+) binding; the sequence is ALHFGAGNIGRG.

Belongs to the mannitol dehydrogenase family.

It carries out the reaction D-mannitol 1-phosphate + NAD(+) = beta-D-fructose 6-phosphate + NADH + H(+). This Yersinia pestis bv. Antiqua (strain Antiqua) protein is Mannitol-1-phosphate 5-dehydrogenase.